Reading from the N-terminus, the 1671-residue chain is Hybrid signal transduction protein dokA (1671 aa).

Residues 1–10 (MSSPHIELHS) are compositionally biased toward basic and acidic residues. Disordered stretches follow at residues 1 to 27 (MSSP…ELTG), 42 to 89 (DDLN…DKND), 126 to 241 (QQQQ…RRSS), 365 to 451 (YSNN…NNEE), 579 to 603 (HNHN…SPFI), and 629 to 651 (SNSS…SSNA). The span at 11 to 27 (QRTLSPQPSSNNFELTG) shows a compositional bias: polar residues. Low complexity-rich tracts occupy residues 45–83 (NNNN…NNNN) and 126–167 (QQQQ…QQQE). A compositionally biased stretch (acidic residues) spans 168–179 (QEQEQEQEQEQE). Low complexity predominate over residues 367-449 (NNNNNTNTNN…NNNNNNNNNN (83 aa)). The span at 591-600 (TTQRASSTDS) shows a compositional bias: polar residues. Positions 1050–1276 (NISHELRTPC…TFWFAIKVSI (227 aa)) constitute a Histidine kinase domain. One can recognise a Response regulatory domain in the interval 1519–1633 (YILVAEDNDI…RLQKTLSDWI (115 aa)).

Under osmotic stress conditions, this protein undergoes phosphorylation at a serine residue in the kinase core, which is not due to an autophosphorylation of dokA. This is in contrast to the classic two-component paradigm, which predicts only histidine and aspartate phosphorylation.

Functionally, part of the osmoregulatory pathway which leads to the increase of intracellular cAMP concentration in response to hyperosmotic stress. Thought to negatively regulate the rdeA-regA pathway by acting as a phosphatase towards the HPt protein rdeA. Has probably no histidine kinase activity. The chain is Hybrid signal transduction protein dokA (dokA) from Dictyostelium discoideum (Social amoeba).